We begin with the raw amino-acid sequence, 429 residues long: 28S rRNA (cytosine-C(5))-methyltransferase (429 aa).

The residue at position 2 (Gly-2) is an N-acetylglycine. A Phosphoserine modification is found at Ser-167. S-adenosyl-L-methionine is bound by residues 234–240, Asp-258, Arg-263, and Asp-305; that span reads CAAPGNK. Residue Cys-359 is the Nucleophile of the active site.

Belongs to the class I-like SAM-binding methyltransferase superfamily. RsmB/NOP family. In terms of tissue distribution, ubiquitous. Detected in placenta, heart and skeletal muscle.

It is found in the nucleus. The protein localises to the nucleolus. It carries out the reaction cytidine(3782) in 28S rRNA + S-adenosyl-L-methionine = 5-methylcytidine(3782) in 28S rRNA + S-adenosyl-L-homocysteine + H(+). In terms of biological role, S-adenosyl-L-methionine-dependent methyltransferase that specifically methylates the C(5) position of cytosine 3782 (m5C3782) in 28S rRNA. m5C3782 promotes protein translation without affecting ribosome biogenesis and fidelity. Required for corpus callosum and cerebral cortex development. This chain is 28S rRNA (cytosine-C(5))-methyltransferase, found in Homo sapiens (Human).